Consider the following 664-residue polypeptide: Protein cueball (664 aa).

The N-terminal stretch at 1–21 is a signal peptide; the sequence is MRNLGIAVTFAVLLVIGYVTA. The Extracellular portion of the chain corresponds to 22–552; sequence LEWDAVVTTD…VTYCKNSFNR (531 aa). N-linked (GlcNAc...) asparagine glycosylation is found at asparagine 40, asparagine 140, and asparagine 188. LDL-receptor class B repeat units lie at residues 115–157, 168–211, and 212–257; these read RKLY…ENHD, RHLY…DHYN, and NRIY…NSQY. EGF-like domains follow at residues 367–399, 402–438, and 473–510; these read EIPICNNFCVHGECVVGADSRPMCKCHAEFEGE, DRNICDGYCLNNGRCALSATGQRSCTCSKNFSGARCE, and EEYTCNNYCLHDGTCILNNDTMLVECRCGSEYTGKRCE. 8 disulfide bridges follow: cysteine 371–cysteine 380, cysteine 375–cysteine 390, cysteine 406–cysteine 416, cysteine 410–cysteine 426, cysteine 428–cysteine 437, cysteine 477–cysteine 487, cysteine 481–cysteine 498, and cysteine 500–cysteine 509. The N-linked (GlcNAc...) asparagine glycan is linked to asparagine 431. A glycan (N-linked (GlcNAc...) asparagine) is linked at asparagine 491. Residue asparagine 551 is glycosylated (N-linked (GlcNAc...) asparagine). Residues 553–573 form a helical membrane-spanning segment; sequence TVVYVSLAFTASLVTLVTILC. Topologically, residues 574–664 are cytoplasmic; it reads TVRRMYERNR…KLPSCVAEKN (91 aa).

It belongs to the cueball family.

Its subcellular location is the cell membrane. Its function is as follows. Has a role in spermatogenesis and oogenesis. In Aedes aegypti (Yellowfever mosquito), this protein is Protein cueball.